We begin with the raw amino-acid sequence, 632 residues long: tRNA uridine 5-carboxymethylaminomethyl modification enzyme MnmG (632 aa).

Residues 15–20 (GAGHAG), isoleucine 127, and serine 182 each bind FAD. Position 276 to 290 (276 to 290 (GPRYCPSIEDKIVRF)) interacts with NAD(+). Glutamine 373 lines the FAD pocket.

The protein belongs to the MnmG family. As to quaternary structure, homodimer. Heterotetramer of two MnmE and two MnmG subunits. FAD serves as cofactor.

The protein resides in the cytoplasm. NAD-binding protein involved in the addition of a carboxymethylaminomethyl (cmnm) group at the wobble position (U34) of certain tRNAs, forming tRNA-cmnm(5)s(2)U34. This chain is tRNA uridine 5-carboxymethylaminomethyl modification enzyme MnmG, found in Streptococcus pyogenes serotype M28 (strain MGAS6180).